The sequence spans 327 residues: Phosphate acyltransferase (327 aa).

This sequence belongs to the PlsX family. Homodimer. Probably interacts with PlsY.

The protein resides in the cytoplasm. It catalyses the reaction a fatty acyl-[ACP] + phosphate = an acyl phosphate + holo-[ACP]. Its pathway is lipid metabolism; phospholipid metabolism. Its function is as follows. Catalyzes the reversible formation of acyl-phosphate (acyl-PO(4)) from acyl-[acyl-carrier-protein] (acyl-ACP). This enzyme utilizes acyl-ACP as fatty acyl donor, but not acyl-CoA. The sequence is that of Phosphate acyltransferase from Mycoplasma mobile (strain ATCC 43663 / 163K / NCTC 11711) (Mesomycoplasma mobile).